Here is a 522-residue protein sequence, read N- to C-terminus: MSNADELLRIEGIRKTFPGVVALDGVDFDLRRGEVHVLLGENGAGKSTLIKMLSGAYRPDGGRVLVEGEEVRIHGAQDSEALGIATIYQEFNLVPDLTVAENIFLGRQPRRLGLIDRKKMEADAAELLARVGVQVSPRARVRELGIARLQMVEIAKALSLNARVLIMDEPTAVLTSEEVEKLFAIVRQLREDGVGIVFITHHLEEIAALGDRVTVIRDGKSVGQVPASTSEDELVRLMVGRSIEQQYPRERPDSGAALLSVEGLTRDGVFHDVSFEVRAGEVVGVAGLVGAGRTEVVRAVFGADPYDRGSVQVAGARVPRHDVSAAMSAGIGLVPEDRKGQGLVLDASVEENLGLVTMRAATRGGLVDLKGQRDAAARVAGQLGVRMAGLGQHVRTLSGGNQQKVVIGKWLLADTKVLILDEPTRGIDVGAKVEIYQLINELTAAGAAVLMISSDLPEVLGMSDRVLVMAQGRIAGELGADEATQDSVMALAVSTNQYKPDKSDKPDASAGKTDQKEAPRGH.

ABC transporter domains lie at 8–243 and 249–496; these read LRIE…GRSI and RERP…VSTN. Residue 40–47 coordinates ATP; that stretch reads GENGAGKS. A disordered region spans residues 492–522; it reads AVSTNQYKPDKSDKPDASAGKTDQKEAPRGH. Basic and acidic residues predominate over residues 499–522; it reads KPDKSDKPDASAGKTDQKEAPRGH.

This sequence belongs to the ABC transporter superfamily. Ribose importer (TC 3.A.1.2.1) family. In terms of assembly, the complex is composed of an ATP-binding protein (RbsA), two transmembrane proteins (RbsC) and a solute-binding protein (RbsB).

It localises to the cell membrane. The enzyme catalyses D-ribose(out) + ATP + H2O = D-ribose(in) + ADP + phosphate + H(+). Its function is as follows. Part of the ABC transporter complex RbsABC involved in ribose import. Responsible for energy coupling to the transport system. The protein is Ribose import ATP-binding protein RbsA 1 of Streptomyces avermitilis (strain ATCC 31267 / DSM 46492 / JCM 5070 / NBRC 14893 / NCIMB 12804 / NRRL 8165 / MA-4680).